Here is a 309-residue protein sequence, read N- to C-terminus: Homoserine kinase (309 aa).

ATP is bound at residue 91 to 101 (PIGSGLGSSAC).

The protein belongs to the GHMP kinase family. Homoserine kinase subfamily.

It localises to the cytoplasm. The enzyme catalyses L-homoserine + ATP = O-phospho-L-homoserine + ADP + H(+). Its pathway is amino-acid biosynthesis; L-threonine biosynthesis; L-threonine from L-aspartate: step 4/5. Its function is as follows. Catalyzes the ATP-dependent phosphorylation of L-homoserine to L-homoserine phosphate. The chain is Homoserine kinase from Salmonella arizonae (strain ATCC BAA-731 / CDC346-86 / RSK2980).